The sequence spans 348 residues: MKFVDEVKVHVLSGNGGNGCVSFRREKYVPRGGPDGGDGGEGGSVIFVASEGKNTLLDFRYRHLFKAESGKHGQGRNRHGKGGRDLVLEVPAGTVIKDAETGEPLVDLSHPGDRWVAARGGRGGRGNARFVSSTRQAPRIAEDGREGEDRELVLELKLMADVGLVGLPNAGKSTLISVVSAARPRIADYPFTTLIPCLGVVRHGEAPPFVMADIPGLIEGAHDGAGLGIRFLRHIERTRILAHLVDISQLSPEEPLRPYRLIESELASYSARLGEKKRVIVLNKVDLVPERDRLEALVSRYEQLGHPVFPVSARTKEGLGELLSALVRILSESGVSLPVEDVEEHVGK.

The 159-residue stretch at 1–159 (MKFVDEVKVH…RELVLELKLM (159 aa)) folds into the Obg domain. One can recognise an OBG-type G domain in the interval 160-331 (ADVGLVGLPN…LLSALVRILS (172 aa)). GTP is bound by residues 166 to 173 (GLPNAGKS), 191 to 195 (FTTLI), 213 to 216 (DIPG), 283 to 286 (NKVD), and 312 to 314 (SAR). Mg(2+) contacts are provided by serine 173 and threonine 193.

It belongs to the TRAFAC class OBG-HflX-like GTPase superfamily. OBG GTPase family. Monomer. It depends on Mg(2+) as a cofactor.

Its subcellular location is the cytoplasm. An essential GTPase which binds GTP, GDP and possibly (p)ppGpp with moderate affinity, with high nucleotide exchange rates and a fairly low GTP hydrolysis rate. Plays a role in control of the cell cycle, stress response, ribosome biogenesis and in those bacteria that undergo differentiation, in morphogenesis control. This is GTPase Obg from Syntrophobacter fumaroxidans (strain DSM 10017 / MPOB).